The chain runs to 645 residues: Minor extracellular protease Epr (645 aa).

The N-terminal stretch at 1 to 27 (MKNMSCKLVVSVTLFFSFLTIGPLAHA) is a signal peptide. The propeptide occupies 28-103 (QNSSEKEVIV…AADSTDFKVL (76 aa)). The Peptidase S8 domain occupies 115-382 (QWNLEPIQVK…YGLIQYKAQA (268 aa)). Catalysis depends on charge relay system residues Asp142, His172, and Ser326. 2 disordered regions span residues 490-577 (KQAK…KTAL) and 591-645 (AEAK…KPKK). The segment covering 491 to 508 (QAKDKVAKAEKSKKKTDV) has biased composition (basic and acidic residues). Polar residues predominate over residues 522 to 547 (SEKTSLQKRLNKVKSTNLKTAQQSVS). The segment covering 592-610 (EAKKVETAKAKVKKAEKDK) has biased composition (basic and acidic residues).

Belongs to the peptidase S8 family. In terms of processing, may undergo two steps of processing in its passage through the cell membrane: removal of the N-terminal signal sequence and cleavage of the C-terminal domain. Several active forms of Epr with molecular masses between 40 and 34 kDa were found in the medium of B.subtilis cultures. The size variation of the active forms expressed by the complete epr gene appears to be the result of partial removal of the C-terminus either by processing or degradation.

Its subcellular location is the secreted. It localises to the cell wall. Requires Ca(2+) for stability. Activity is inhibited by phenylmethylsulfonyl fluoride (PMSF) and EDTA. Its function is as follows. Serine protease. Involved in the production of the competence and sporulation stimulating factor CSF. In addition, is essential for swarming motility. Plays a key role in DegU-mediated swarming motility. The protease activity is dispensable for swarming. Not essential for growth or sporulation. This chain is Minor extracellular protease Epr, found in Bacillus subtilis (strain 168).